A 431-amino-acid polypeptide reads, in one-letter code: Sorting nexin-31 (431 aa).

Residues 1 to 107 (MHICIPVTEE…DYFRKLQMDT (107 aa)) form the PX domain.

It belongs to the sorting nexin family.

May be involved in protein trafficking. This is Sorting nexin-31 (snx31) from Xenopus laevis (African clawed frog).